The sequence spans 98 residues: Aspartyl/glutamyl-tRNA(Asn/Gln) amidotransferase subunit C (98 aa).

The protein belongs to the GatC family. In terms of assembly, heterotrimer of A, B and C subunits.

The enzyme catalyses L-glutamyl-tRNA(Gln) + L-glutamine + ATP + H2O = L-glutaminyl-tRNA(Gln) + L-glutamate + ADP + phosphate + H(+). It carries out the reaction L-aspartyl-tRNA(Asn) + L-glutamine + ATP + H2O = L-asparaginyl-tRNA(Asn) + L-glutamate + ADP + phosphate + 2 H(+). Allows the formation of correctly charged Asn-tRNA(Asn) or Gln-tRNA(Gln) through the transamidation of misacylated Asp-tRNA(Asn) or Glu-tRNA(Gln) in organisms which lack either or both of asparaginyl-tRNA or glutaminyl-tRNA synthetases. The reaction takes place in the presence of glutamine and ATP through an activated phospho-Asp-tRNA(Asn) or phospho-Glu-tRNA(Gln). The chain is Aspartyl/glutamyl-tRNA(Asn/Gln) amidotransferase subunit C from Kocuria rhizophila (strain ATCC 9341 / DSM 348 / NBRC 103217 / DC2201).